The primary structure comprises 264 residues: Protein GrpE (264 aa).

A compositionally biased stretch (basic and acidic residues) spans 36–49; it reads KVQSKKVSSDHSSS. Residues 36 to 59 form a disordered region; that stretch reads KVQSKKVSSDHSSSEDNASSDINS. Low complexity predominate over residues 50–59; the sequence is EDNASSDINS.

It belongs to the GrpE family. In terms of assembly, homodimer.

The protein localises to the cytoplasm. Participates actively in the response to hyperosmotic and heat shock by preventing the aggregation of stress-denatured proteins, in association with DnaK and GrpE. It is the nucleotide exchange factor for DnaK and may function as a thermosensor. Unfolded proteins bind initially to DnaJ; upon interaction with the DnaJ-bound protein, DnaK hydrolyzes its bound ATP, resulting in the formation of a stable complex. GrpE releases ADP from DnaK; ATP binding to DnaK triggers the release of the substrate protein, thus completing the reaction cycle. Several rounds of ATP-dependent interactions between DnaJ, DnaK and GrpE are required for fully efficient folding. The polypeptide is Protein GrpE (Peanut witches'-broom phytoplasma).